We begin with the raw amino-acid sequence, 382 residues long: Mannitol-1-phosphate 5-dehydrogenase (382 aa).

An NAD(+)-binding site is contributed by 3 to 14 (AIHFGAGNIGRG).

It belongs to the mannitol dehydrogenase family.

It catalyses the reaction D-mannitol 1-phosphate + NAD(+) = beta-D-fructose 6-phosphate + NADH + H(+). The polypeptide is Mannitol-1-phosphate 5-dehydrogenase (Psychromonas ingrahamii (strain DSM 17664 / CCUG 51855 / 37)).